The following is a 200-amino-acid chain: Imidazole glycerol phosphate synthase subunit HisH (200 aa).

Positions 3 to 200 constitute a Glutamine amidotransferase type-1 domain; it reads EVALIDAGGA…LRNFLEMDAA (198 aa). Catalysis depends on Cys78, which acts as the Nucleophile. Active-site residues include His179 and Glu181.

As to quaternary structure, heterodimer of HisH and HisF.

The protein resides in the cytoplasm. The enzyme catalyses 5-[(5-phospho-1-deoxy-D-ribulos-1-ylimino)methylamino]-1-(5-phospho-beta-D-ribosyl)imidazole-4-carboxamide + L-glutamine = D-erythro-1-(imidazol-4-yl)glycerol 3-phosphate + 5-amino-1-(5-phospho-beta-D-ribosyl)imidazole-4-carboxamide + L-glutamate + H(+). The catalysed reaction is L-glutamine + H2O = L-glutamate + NH4(+). Its pathway is amino-acid biosynthesis; L-histidine biosynthesis; L-histidine from 5-phospho-alpha-D-ribose 1-diphosphate: step 5/9. IGPS catalyzes the conversion of PRFAR and glutamine to IGP, AICAR and glutamate. The HisH subunit catalyzes the hydrolysis of glutamine to glutamate and ammonia as part of the synthesis of IGP and AICAR. The resulting ammonia molecule is channeled to the active site of HisF. This chain is Imidazole glycerol phosphate synthase subunit HisH, found in Xylella fastidiosa (strain Temecula1 / ATCC 700964).